Here is a 134-residue protein sequence, read N- to C-terminus: Small ribosomal subunit protein uS8c (134 aa).

Belongs to the universal ribosomal protein uS8 family. In terms of assembly, part of the 30S ribosomal subunit.

The protein localises to the plastid. It is found in the chloroplast. Functionally, one of the primary rRNA binding proteins, it binds directly to 16S rRNA central domain where it helps coordinate assembly of the platform of the 30S subunit. This is Small ribosomal subunit protein uS8c (rps8) from Coffea arabica (Arabian coffee).